The following is a 48-amino-acid chain: U-reduvitoxin-Pr5a (48 aa).

A signal peptide spans 1 to 19 (MRLFLIFTFIVASLASVYG). 3 disulfide bridges follow: cysteine 20/cysteine 34, cysteine 27/cysteine 39, and cysteine 33/cysteine 44.

This sequence belongs to the venom Ptu1-like knottin family. Expressed by the venom gland.

It is found in the secreted. Functionally, binds reversibly and blocks P/Q-type voltage-gated calcium channels (Cav). In Platymeris rhadamanthus (Red spot assassin bug), this protein is U-reduvitoxin-Pr5a.